Here is a 392-residue protein sequence, read N- to C-terminus: Pannexin-3 (392 aa).

At 1-39 (MSLAHTAAEYMLSDALLPDRRGPRLKGLRLELPLDRIVK) the chain is on the cytoplasmic side. A helical transmembrane segment spans residues 40–60 (FVAVGSPLLLMSLAFAQEFSS). Topologically, residues 61-113 (GSPISCFSPSNFSIRQAAYVDSSCWDSLLHHKQDGPGQDKMKSLWPHKALPYS) are extracellular. Asparagine 71 carries N-linked (GlcNAc...) asparagine glycosylation. A helical membrane pass occupies residues 114–134 (LLALALLMYLPVLLWQYAAVP). The Cytoplasmic portion of the chain corresponds to 135–215 (ALSSDLLFII…VATYLLRNSL (81 aa)). Residues 216–236 (LLIFTSATYLYLGHFHLDVFF) traverse the membrane as a helical segment. Topologically, residues 237 to 267 (QEEFSCSIKTGLLSDETHVPNLITCRLTSLS) are extracellular. The chain crosses the membrane as a helical span at residues 268-288 (IFQIVSLSSVAIYTILVPVII). Topologically, residues 289–392 (YNLTRLCRWD…LTNSACDEHP (104 aa)) are cytoplasmic.

It belongs to the pannexin family. As to quaternary structure, homoheptameric.

The protein localises to the cell membrane. It is found in the cell junction. The protein resides in the gap junction. Its subcellular location is the endoplasmic reticulum membrane. It carries out the reaction Ca(2+)(in) = Ca(2+)(out). The catalysed reaction is ATP(in) = ATP(out). Regulator of osteoblast differentiation by functionning as a Ca(2+) channel in the endoplasmic reticulum which regulates calmodulin (CaM) pathways. Allows ATP release into the extracellular space and activation or purinergic receptors. The protein is Pannexin-3 of Homo sapiens (Human).